Reading from the N-terminus, the 127-residue chain is Protein translocase subunit SecE (127 aa).

3 helical membrane passes run 16-36 (IAKW…NHYY), 42-62 (IFQN…IFLT), and 98-118 (IIVT…LIWF).

Belongs to the SecE/SEC61-gamma family. In terms of assembly, component of the Sec protein translocase complex. Heterotrimer consisting of SecY, SecE and SecG subunits. The heterotrimers can form oligomers, although 1 heterotrimer is thought to be able to translocate proteins. Interacts with the ribosome. Interacts with SecDF, and other proteins may be involved. Interacts with SecA.

The protein resides in the cell membrane. Functionally, essential subunit of the Sec protein translocation channel SecYEG. Clamps together the 2 halves of SecY. May contact the channel plug during translocation. The polypeptide is Protein translocase subunit SecE (Buchnera aphidicola subsp. Baizongia pistaciae (strain Bp)).